Consider the following 281-residue polypeptide: NADH-quinone oxidoreductase subunit B (281 aa).

Residues C37, C38, C103, and C132 each coordinate [4Fe-4S] cluster. A disordered region spans residues 242 to 281; it reads DAKPLDESRAHGPGPTTADIADAADTADSDAAPGATHDTP. Positions 257 to 281 are enriched in low complexity; that stretch reads TTADIADAADTADSDAAPGATHDTP.

Belongs to the complex I 20 kDa subunit family. As to quaternary structure, NDH-1 is composed of 14 different subunits. Subunits NuoB, C, D, E, F, and G constitute the peripheral sector of the complex. [4Fe-4S] cluster serves as cofactor.

The protein localises to the cell membrane. It catalyses the reaction a quinone + NADH + 5 H(+)(in) = a quinol + NAD(+) + 4 H(+)(out). NDH-1 shuttles electrons from NADH, via FMN and iron-sulfur (Fe-S) centers, to quinones in the respiratory chain. The immediate electron acceptor for the enzyme in this species is believed to be a menaquinone. Couples the redox reaction to proton translocation (for every two electrons transferred, four hydrogen ions are translocated across the cytoplasmic membrane), and thus conserves the redox energy in a proton gradient. The polypeptide is NADH-quinone oxidoreductase subunit B (Frankia alni (strain DSM 45986 / CECT 9034 / ACN14a)).